The primary structure comprises 285 residues: Bark agglutinin I polypeptide A (285 aa).

The N-terminal stretch at 1–31 (MTSYNFKTQTSFPLLLSISFFFLLLLNKVNS) is a signal peptide. The N-linked (GlcNAc...) asparagine glycan is linked to Asn-147. The Mn(2+) site is built by Glu-156 and Asp-158. The Ca(2+) site is built by Asp-158, Phe-160, Asn-162, and Asp-166. Mn(2+) is bound by residues Asp-166 and His-171. A glycan (N-linked (GlcNAc...) asparagine) is linked at Asn-188.

It belongs to the leguminous lectin family. As to quaternary structure, RPbAI is composed of two polypeptides, A and B, that associate into five different tetrameric isolectins. The A4 combination is the only one devoid of agglutination activity. Isoform B4 displays maximal agglutination activity. In terms of tissue distribution, strong expression in seed. Lower levels in the flower, and the bark of the roots. No expression in leaf. The lectin accumulates in the inner bark in autumn.

Functionally, N-acetyl-D-galactosamine specific lectin. Bark lectins are storage protein that probably maintains stocks of nitrogen during dormant period. Self-aggregatable molecules that can bind their own carbohydrate side chains. They could also play a role in the plant's defense against phytophagous invertebrates or herbivorous higher animals. This Robinia pseudoacacia (Black locust) protein is Bark agglutinin I polypeptide A.